We begin with the raw amino-acid sequence, 294 residues long: Sarcotoxin-2A (294 aa).

A signal peptide spans 1 to 22 (MKSFVFFAACMAIIALSSLVQA). Positions 23–24 (YP) are cleaved as a propeptide — removed by a dipeptidylpeptidase. Glutamine 25 is subject to Pyrrolidone carboxylic acid. Arginine 293 is modified (arginine amide).

Belongs to the attacin/sarcotoxin-2 family. As to expression, synthesized by the fat body and is eventually secreted into the hemolymph.

It is found in the secreted. Its function is as follows. Sarcotoxin II is an antibacterial protein which plays a role in the inflammatory response of this insect. The main effect of sarcotoxin II on E.coli may be the inhibition of cell wall synthesis, including septum formation. The chain is Sarcotoxin-2A from Sarcophaga peregrina (Flesh fly).